The sequence spans 267 residues: DNA damage-regulated autophagy modulator protein 2 (267 aa).

A run of 6 helical transmembrane segments spans residues 8–28 (LSFLPSALVIWTFATFIFSYI), 53–73 (RCLFGVMLNIAAVLGIATMYV), 87–107 (LIIKLNKAGLVLGILSCLGLS), 118–138 (FIVHVCGAVLAFSMGSFYMFV), 160–180 (LLLVIWCGVSALSMMTCSSIL), and 203–223 (VLHLVTTAAEWSMSFSFFGFF).

It belongs to the DRAM/TMEM150 family. In terms of tissue distribution, expressed in the retina.

It localises to the lysosome membrane. The protein resides in the photoreceptor inner segment. Its subcellular location is the apical cell membrane. In terms of biological role, plays a role in the initiation of autophagy. In the retina, might be involved in the process of photoreceptor cells renewal and recycling to preserve visual function. Induces apoptotic cell death when coexpressed with DRAM1. The sequence is that of DNA damage-regulated autophagy modulator protein 2 (Dram2) from Mus musculus (Mouse).